We begin with the raw amino-acid sequence, 1053 residues long: DIS3-like exonuclease 1 (1053 aa).

The CSD1 domain occupies 236 to 310; it reads AGIKSGRYIQ…KSEWKGRTAA (75 aa). Residues 306–332 are disordered; that stretch reads GRTAALGENDSDDKASGESPSEPMPTG. In terms of domain architecture, CSD2 spans 365–431; that stretch reads ILVTPWDYRI…GEIATILVEN (67 aa). The RNB domain occupies 465–816; sequence RKDLRTTHLV…VHRLLMAAIS (352 aa). Serine 989 is modified (phosphoserine).

It belongs to the RNR ribonuclease family. Component of the RNA exosome complex. The catalytically inactive RNA exosome core (Exo-9) complex is believed to associate with catalytic subunits EXOSC10, and DIS3 or DIS3L in cytoplasmic- and nuclear-specific RNA exosome complex forms. Requires Mg(2+) as cofactor.

The protein localises to the cytoplasm. The catalysed reaction is Exonucleolytic cleavage in the 3'- to 5'-direction to yield nucleoside 5'-phosphates.. Functionally, catalytic component of the RNA exosome complex which has 3'-&gt;5' exoribonuclease activity and participates in a multitude of cellular RNA processing and degradation events. In the cytoplasm, the RNA exosome complex is involved in general mRNA turnover and specifically degrades inherently unstable mRNAs containing AU-rich elements (AREs) within their 3' untranslated regions, and in RNA surveillance pathways, preventing translation of aberrant mRNAs. It seems to be involved in degradation of histone mRNA. This chain is DIS3-like exonuclease 1 (Dis3l), found in Mus musculus (Mouse).